The primary structure comprises 208 residues: Protein-L-isoaspartate O-methyltransferase (208 aa).

Ser59 is an active-site residue.

It belongs to the methyltransferase superfamily. L-isoaspartyl/D-aspartyl protein methyltransferase family.

The protein localises to the cytoplasm. The enzyme catalyses [protein]-L-isoaspartate + S-adenosyl-L-methionine = [protein]-L-isoaspartate alpha-methyl ester + S-adenosyl-L-homocysteine. In terms of biological role, catalyzes the methyl esterification of L-isoaspartyl residues in peptides and proteins that result from spontaneous decomposition of normal L-aspartyl and L-asparaginyl residues. It plays a role in the repair and/or degradation of damaged proteins. This chain is Protein-L-isoaspartate O-methyltransferase, found in Shigella sonnei (strain Ss046).